The chain runs to 579 residues: Protein disulfide isomerase-like 1-3 (579 aa).

The signal sequence occupies residues 1-25 (MASSSTSISLLLFVSFILLLVNSRA). N-linked (GlcNAc...) asparagine glycosylation occurs at asparagine 27. Composition is skewed to basic and acidic residues over residues 44 to 69 (EESK…RDFE) and 80 to 89 (EFHHGDHGYE). Positions 44-91 (EESKEQSHGGGSYHEEEHDHQHRDFENYDDLEQGGGEFHHGDHGYEEE) are disordered. The 124-residue stretch at 81-204 (FHHGDHGYEE…IVTWLKKKAS (124 aa)) folds into the Thioredoxin 1 domain. 2 N-linked (GlcNAc...) asparagine glycosylation sites follow: asparagine 108 and asparagine 115. Catalysis depends on nucleophile residues cysteine 128 and cysteine 131. Cysteine 128 and cysteine 131 are oxidised to a cystine. N-linked (GlcNAc...) asparagine glycosylation is found at asparagine 209, asparagine 293, asparagine 313, and asparagine 338. In terms of domain architecture, Thioredoxin 2 spans 416–546 (DFLADKLKPF…LYKFLKKHAS (131 aa)). Active-site nucleophile residues include cysteine 467 and cysteine 470. Cysteines 467 and 470 form a disulfide. Asparagine 520 carries N-linked (GlcNAc...) asparagine glycosylation. The disordered stretch occupies residues 558–579 (EPVISTMKSDEKIEGDSSKDEL). Over residues 565 to 579 (KSDEKIEGDSSKDEL) the composition is skewed to basic and acidic residues. The short motif at 576–579 (KDEL) is the Prevents secretion from ER element.

This sequence belongs to the protein disulfide isomerase family. In terms of tissue distribution, widely expressed.

Its subcellular location is the endoplasmic reticulum lumen. It carries out the reaction Catalyzes the rearrangement of -S-S- bonds in proteins.. In terms of biological role, acts as a protein-folding catalyst that interacts with nascent polypeptides to catalyze the formation, isomerization, and reduction or oxidation of disulfide bonds. This Arabidopsis thaliana (Mouse-ear cress) protein is Protein disulfide isomerase-like 1-3 (PDIL1-3).